Consider the following 223-residue polypeptide: MPPQQQRGRGRGRGPGGPGGPGGPGPEQAPEDPDRESGGERRRGRGRGAGRGGGDKAERAQAETEFQERVVQIRRVTKVVKGGKKLSFRAVIVVGDGNGRVGVGVGKANDVIGAVKKGVSDARKALIRVPLNKINSIPHPMSGSSGAANVFLKPASGGTGVIAGGAVRTVLELAGIKNVLAKSLGSKSPLNNARAAADALSRLRTLSEVAGERGVPVSNLWSR.

The segment at 1–66 (MPPQQQRGRG…AERAQAETEF (66 aa)) is disordered. Residues 13-22 (RGPGGPGGPG) show a composition bias toward gly residues. Residues 53-66 (GGDKAERAQAETEF) show a composition bias toward basic and acidic residues. Residues 66-129 (FQERVVQIRR…SDARKALIRV (64 aa)) form the S5 DRBM domain.

Belongs to the universal ribosomal protein uS5 family. Part of the 30S ribosomal subunit. Contacts proteins S4 and S8.

Its function is as follows. With S4 and S12 plays an important role in translational accuracy. Functionally, located at the back of the 30S subunit body where it stabilizes the conformation of the head with respect to the body. The chain is Small ribosomal subunit protein uS5 from Gloeobacter violaceus (strain ATCC 29082 / PCC 7421).